The following is a 207-amino-acid chain: Protein GET1 (207 aa).

Residues 1-4 (MPSL) lie on the Lumenal side of the membrane. Residues 5–24 (LISVLFLHIAIYIINTIGAS) traverse the membrane as a helical segment. Residues 25-110 (TIDSLLWLIY…LFDVAVKALR (86 aa)) lie on the Cytoplasmic side of the membrane. Residues 44 to 97 (MAREQHQMKLEVVQLKREMNATSSQDEFAKWAKLRRRHDKALEEYEVKNKQFSR) adopt a coiled-coil conformation. The helical transmembrane segment at 111-131 (WAGTSGLILLLQFWFSKTPIF) threads the bilayer. Residues 132 to 155 (TLPPSWIPWQVEWVLSFPRAPMGT) are Lumenal-facing. The helical transmembrane segment at 156-172 (VSIQVWGGACAVMVALV) threads the bilayer. The Cytoplasmic segment spans residues 173 to 207 (GEAIGATVRYLYGSKDSMEAIKVGAGAVEKEKKRQ).

This sequence belongs to the WRB/GET1 family. In terms of assembly, interacts with GET3.

Its subcellular location is the endoplasmic reticulum membrane. Its function is as follows. Required for the post-translational delivery of tail-anchored (TA) proteins to the endoplasmic reticulum. Acts as a membrane receptor for soluble GET3, which recognizes and selectively binds the transmembrane domain of TA proteins in the cytosol. In Paracoccidioides lutzii (strain ATCC MYA-826 / Pb01) (Paracoccidioides brasiliensis), this protein is Protein GET1.